Here is a 337-residue protein sequence, read N- to C-terminus: Protein RETICULATA-RELATED 3, chloroplastic (337 aa).

Residues methionine 1–cysteine 59 constitute a chloroplast transit peptide. A compositionally biased stretch (gly residues) spans asparagine 70 to glycine 89. Residues asparagine 70 to serine 96 form a disordered region. 2 helical membrane passes run phenylalanine 151–alanine 171 and valine 216–isoleucine 236.

Belongs to the RETICULATA family. As to expression, expressed in root meristem, root vasculature, distal region of young leaf primordia, leaf bundle sheath cells, hydathodes and pollen grains.

Its subcellular location is the plastid. The protein resides in the chloroplast membrane. May play a role in leaf development. Required for leaf mesophyll cell division in the early stages of leaf organogenesis. In Arabidopsis thaliana (Mouse-ear cress), this protein is Protein RETICULATA-RELATED 3, chloroplastic.